The sequence spans 245 residues: Phosphoribosylaminoimidazole-succinocarboxamide synthase (245 aa).

It belongs to the SAICAR synthetase family.

The enzyme catalyses 5-amino-1-(5-phospho-D-ribosyl)imidazole-4-carboxylate + L-aspartate + ATP = (2S)-2-[5-amino-1-(5-phospho-beta-D-ribosyl)imidazole-4-carboxamido]succinate + ADP + phosphate + 2 H(+). It participates in purine metabolism; IMP biosynthesis via de novo pathway; 5-amino-1-(5-phospho-D-ribosyl)imidazole-4-carboxamide from 5-amino-1-(5-phospho-D-ribosyl)imidazole-4-carboxylate: step 1/2. In Acaryochloris marina (strain MBIC 11017), this protein is Phosphoribosylaminoimidazole-succinocarboxamide synthase.